Consider the following 204-residue polypeptide: Holliday junction branch migration complex subunit RuvA (204 aa).

The segment at 1–64 (MFAFLRGELV…EDLQQLFGFL (64 aa)) is domain I. The interval 65 to 143 (DEEELQLFRL…KIQPTSSAKA (79 aa)) is domain II. Positions 144–151 (GAPSAVLS) are flexible linker. Residues 151–204 (SATQLIDDAVAALTTLGFPKASAQKAVSKVLETTPGLSVEELVRTSLAAMHNNL) are domain III.

It belongs to the RuvA family. In terms of assembly, homotetramer. Forms an RuvA(8)-RuvB(12)-Holliday junction (HJ) complex. HJ DNA is sandwiched between 2 RuvA tetramers; dsDNA enters through RuvA and exits via RuvB. An RuvB hexamer assembles on each DNA strand where it exits the tetramer. Each RuvB hexamer is contacted by two RuvA subunits (via domain III) on 2 adjacent RuvB subunits; this complex drives branch migration. In the full resolvosome a probable DNA-RuvA(4)-RuvB(12)-RuvC(2) complex forms which resolves the HJ.

Its subcellular location is the cytoplasm. In terms of biological role, the RuvA-RuvB-RuvC complex processes Holliday junction (HJ) DNA during genetic recombination and DNA repair, while the RuvA-RuvB complex plays an important role in the rescue of blocked DNA replication forks via replication fork reversal (RFR). RuvA specifically binds to HJ cruciform DNA, conferring on it an open structure. The RuvB hexamer acts as an ATP-dependent pump, pulling dsDNA into and through the RuvAB complex. HJ branch migration allows RuvC to scan DNA until it finds its consensus sequence, where it cleaves and resolves the cruciform DNA. The chain is Holliday junction branch migration complex subunit RuvA from Chlorobaculum parvum (strain DSM 263 / NCIMB 8327) (Chlorobium vibrioforme subsp. thiosulfatophilum).